Here is a 1012-residue protein sequence, read N- to C-terminus: Structural polyprotein (1012 aa).

Position 30 (D30) interacts with a divalent metal cation. One can recognise a Peptidase S50 domain in the interval 513 to 755 (ADKGYEVVAN…AGRQYHLAMA (243 aa)). S652 (nucleophile) is an active-site residue. The active site involves K692. The tract at residues 970 to 1012 (MEMKHRNPRRAPPKPKPKPNAPSQRPPGRLGRWIRTVSDEDLE) is disordered. A compositionally biased stretch (basic residues) spans 975 to 986 (RNPRRAPPKPKP). The tract at residues 1003-1012 (IRTVSDEDLE) is interaction with VP1 protein.

As to quaternary structure, homotrimer. A central divalent metal stabilizes the VP2 trimer. Interacts with host ITGA4/ITGB1. In terms of assembly, homodimer. Interacts (via C-terminus) with VP1 in the cytoplasm. Interacts with VP2. Specific enzymatic cleavages yield mature proteins. The capsid assembly seems to be regulated by polyprotein processing. The protease VP4 cleaves itself off the polyprotein, thus releasing pre-VP2 and VP3 within the infected cell. During capsid assembly, the C-terminus of pre-VP2 is further processed by VP4, giving rise to VP2, the external capsid protein and three small peptides that all stay closely associated with the capsid.

It is found in the virion. Its subcellular location is the host cytoplasm. Its function is as follows. Capsid protein VP2 self assembles to form an icosahedral capsid with a T=13 symmetry, about 70 nm in diameter, and consisting of 260 VP2 trimers. The capsid encapsulates the genomic dsRNA. VP2 is also involved in attachment and entry into the host cell by interacting with host ITGA4/ITGB1. In terms of biological role, the precursor of VP2 plays an important role in capsid assembly. First, pre-VP2 and VP2 oligomers assemble to form a procapsid. Then, the pre-VP2 intermediates may be processed into VP2 proteins by proteolytic cleavage mediated by VP4 to obtain the mature virion. The final capsid is composed of pentamers and hexamers but VP2 has a natural tendency to assemble into all-pentameric structures. Therefore pre-VP2 may be required to allow formation of the hexameric structures. Functionally, protease VP4 is a serine protease that cleaves the polyprotein into its final products. Pre-VP2 is first partially cleaved, and may be completely processed by VP4 upon capsid maturation. Capsid protein VP3 plays a key role in virion assembly by providing a scaffold for the capsid made of VP2. May self-assemble to form a T=4-like icosahedral inner-capsid composed of at least 180 trimers. Plays a role in genomic RNA packaging by recruiting VP1 into the capsid and interacting with the dsRNA genome segments to form a ribonucleoprotein complex. Additionally, the interaction of the VP3 C-terminal tail with VP1 removes the inherent structural blockade of the polymerase active site. Thus, VP3 can also function as a transcriptional activator. Its function is as follows. Structural peptide 1 is a small peptide derived from pre-VP2 C-terminus. It destabilizes and perforates cell membranes, suggesting a role during entry. In terms of biological role, structural peptide 2 is a small peptide derived from pVP2 C-terminus. It is not essential for the virus viability, but viral growth is affected when missing. Functionally, structural peptide 3 is a small peptide derived from pVP2 C-terminus. It is not essential for the virus viability, but viral growth is affected when missing. Structural peptide 4 is a small peptide derived from pVP2 C-terminus. It is essential for the virus viability. This Avian infectious bursal disease virus (strain Australian 002-73) (IBDV) protein is Structural polyprotein.